The sequence spans 593 residues: Mitoguardin 2 (593 aa).

A run of 2 helical transmembrane segments spans residues M11–G31 and P42–A62. Disordered stretches follow at residues P98–S134, T150–G171, and V197–Q229. Composition is skewed to low complexity over residues S106 to S116 and S124 to S134. The residue at position 132 (S132) is a Phosphoserine. Residues S205–T218 show a composition bias toward polar residues. T206 is subject to Phosphothreonine. 3 positions are modified to phosphoserine: S220, S224, and S228. Position 273 is a phosphothreonine (T273). 2 positions are modified to phosphoserine: S276 and S295. An FFAT motif is present at residues S292 to E298.

Belongs to the mitoguardin family. In terms of assembly, homodimer and heterodimer; forms heterodimers with MIGA1. Interacts with PLD6/MitoPLD. Interacts (via phosphorylated FFAT motif) with MOSPD2. Post-translationally, phosphorylation at Ser-295 of the FFAT motif activates interaction with MOSPD2.

Its subcellular location is the mitochondrion outer membrane. Functionally, regulator of mitochondrial fusion. Acts by forming homo- and heterodimers at the mitochondrial outer membrane and facilitating the formation of PLD6/MitoPLD dimers. May act by regulating phospholipid metabolism via PLD6/MitoPLD. The polypeptide is Mitoguardin 2 (Mus musculus (Mouse)).